A 121-amino-acid chain; its full sequence is Small ribosomal subunit protein bS6 (121 aa).

Belongs to the bacterial ribosomal protein bS6 family.

Functionally, binds together with bS18 to 16S ribosomal RNA. This Rickettsia peacockii (strain Rustic) protein is Small ribosomal subunit protein bS6.